A 341-amino-acid polypeptide reads, in one-letter code: Phosphoribosylformylglycinamidine cyclo-ligase (341 aa).

Belongs to the AIR synthase family.

It is found in the cytoplasm. It carries out the reaction 2-formamido-N(1)-(5-O-phospho-beta-D-ribosyl)acetamidine + ATP = 5-amino-1-(5-phospho-beta-D-ribosyl)imidazole + ADP + phosphate + H(+). It participates in purine metabolism; IMP biosynthesis via de novo pathway; 5-amino-1-(5-phospho-D-ribosyl)imidazole from N(2)-formyl-N(1)-(5-phospho-D-ribosyl)glycinamide: step 2/2. This chain is Phosphoribosylformylglycinamidine cyclo-ligase, found in Caldicellulosiruptor saccharolyticus (strain ATCC 43494 / DSM 8903 / Tp8T 6331).